Consider the following 156-residue polypeptide: Bacterial microcompartment shell protein PduK (156 aa).

Positions 4–89 constitute a BMC domain; that stretch reads SLGLLEVSGL…PGDGILSHSV (86 aa). The segment at 81–119 is disordered; that stretch reads GDGILSHSVTPESESEPAPAPTPVVPHEEIPEDHAAPEA. Positions 106 to 116 are enriched in basic and acidic residues; sequence PHEEIPEDHAA.

This sequence belongs to the bacterial microcompartments protein family. Interacts with shell protein PduA and assembly protein PduM. Interacts with PduP, probably with its first 18 residues. Fe cation is required as a cofactor.

It is found in the bacterial microcompartment. Its pathway is polyol metabolism; 1,2-propanediol degradation. In terms of biological role, a minor shell protein of the bacterial microcompartment (BMC) dedicated to 1,2-propanediol (1,2-PD) degradation. Expression of a cosmid containing the full 21-gene pdu operon in E.coli allows E.coli to grow on 1,2-propanediol (1,2-PD) with the appearance of bacterial microcompartments (BMC) in its cytoplasm. Overexpression of this protein leads to the appearance of a single large aggregate complex in the cytoplasm. Functionally, the 1,2-PD-specific bacterial microcompartment (BMC) concentrates low levels of 1,2-PD catabolic enzymes, concentrates volatile reaction intermediates thus enhancing pathway flux and keeps the level of toxic, mutagenic propionaldehyde low. This is Bacterial microcompartment shell protein PduK from Citrobacter freundii.